A 305-amino-acid polypeptide reads, in one-letter code: Serine/threonine-protein phosphatase PP-X isozyme 1 (305 aa).

Mn(2+) contacts are provided by Asp51, His53, Asp79, and Asn111. His112 serves as the catalytic Proton donor. Mn(2+)-binding residues include His161 and His236.

Belongs to the PPP phosphatase family. PP-4 (PP-X) subfamily. Interacts with TAP46. Requires Mn(2+) as cofactor. Ubiquitous, mostly expressed in root mersitems, flowers, and vascular tissues.

The protein localises to the plastid stroma. It carries out the reaction O-phospho-L-seryl-[protein] + H2O = L-seryl-[protein] + phosphate. The catalysed reaction is O-phospho-L-threonyl-[protein] + H2O = L-threonyl-[protein] + phosphate. The sequence is that of Serine/threonine-protein phosphatase PP-X isozyme 1 (PPX1) from Arabidopsis thaliana (Mouse-ear cress).